A 409-amino-acid chain; its full sequence is Imidazolonepropionase (409 aa).

The Fe(3+) site is built by histidine 70 and histidine 72. Zn(2+) is bound by residues histidine 70 and histidine 72. 3 residues coordinate 4-imidazolone-5-propanoate: arginine 79, tyrosine 137, and histidine 164. Residue tyrosine 137 coordinates N-formimidoyl-L-glutamate. Histidine 225 contacts Fe(3+). Position 225 (histidine 225) interacts with Zn(2+). Glutamine 228 contacts 4-imidazolone-5-propanoate. Asparagine 314 and glycine 316 together coordinate N-formimidoyl-L-glutamate. Threonine 317 lines the 4-imidazolone-5-propanoate pocket.

Belongs to the metallo-dependent hydrolases superfamily. HutI family. The cofactor is Zn(2+). It depends on Fe(3+) as a cofactor.

The protein resides in the cytoplasm. The catalysed reaction is 4-imidazolone-5-propanoate + H2O = N-formimidoyl-L-glutamate. Its pathway is amino-acid degradation; L-histidine degradation into L-glutamate; N-formimidoyl-L-glutamate from L-histidine: step 3/3. Functionally, catalyzes the hydrolytic cleavage of the carbon-nitrogen bond in imidazolone-5-propanoate to yield N-formimidoyl-L-glutamate. It is the third step in the universal histidine degradation pathway. The protein is Imidazolonepropionase of Paenarthrobacter aurescens (strain TC1).